The chain runs to 422 residues: Zinc-regulated transporter 2 (422 aa).

The Extracellular portion of the chain corresponds to 1–27 (MVDLIARDDSVDTCQASNGYNGHAGLR). A helical transmembrane segment spans residues 28–48 (ILAVFIILISSGLGVYFPILS). Over 49-60 (SRYSFIRLPNWC) the chain is Cytoplasmic. The helical transmembrane segment at 61-81 (FFIAKFFGSGVIVATAFVHLL) threads the bilayer. The Extracellular portion of the chain corresponds to 82–99 (QPAAEALGDECLGGTFAE). Residues 100–120 (YPWAFGICLMSLFLLFFTEII) traverse the membrane as a helical segment. Residues 121 to 262 (THYFVAKTLG…EEDKEQYLNQ (142 aa)) are Cytoplasmic-facing. Phosphoserine occurs at positions 148, 149, 162, and 170. Threonine 188 carries the post-translational modification Phosphothreonine. Residues 263–283 (ILAVFILEFGIIFHSVFVGLS) traverse the membrane as a helical segment. Residues 284-290 (LSVAGEE) lie on the Extracellular side of the membrane. Residues 291-311 (FETLFIVLTFHQMFEGLGLGT) traverse the membrane as a helical segment. The Cytoplasmic portion of the chain corresponds to 312–326 (RVAETNWPESKKYMP). Residues 327-347 (WLMGLAFTLTSPIAVAVGIGV) form a helical membrane-spanning segment. The Extracellular segment spans residues 348–358 (RHSWIPGSRRA). A helical transmembrane segment spans residues 359 to 379 (LIANGVFDSISSGILIYTGLV). Over 380–400 (ELMAHEFLYSNQFKGPDGLKK) the chain is Cytoplasmic. A helical membrane pass occupies residues 401-421 (MLSAYLIMCCGAALMALLGKW). A topological domain (extracellular) is located at residue alanine 422.

The protein belongs to the ZIP transporter (TC 2.A.5) family.

The protein localises to the membrane. Its function is as follows. Low-affinity zinc transport protein. Active in zinc-replete cells and is time-, temperature- and concentration-dependent and prefers zinc over other metals as its substrate. In Saccharomyces cerevisiae (strain ATCC 204508 / S288c) (Baker's yeast), this protein is Zinc-regulated transporter 2 (ZRT2).